A 526-amino-acid polypeptide reads, in one-letter code: Glutamate--cysteine ligase (526 aa).

The protein belongs to the glutamate--cysteine ligase type 1 family. Type 1 subfamily.

It carries out the reaction L-cysteine + L-glutamate + ATP = gamma-L-glutamyl-L-cysteine + ADP + phosphate + H(+). It functions in the pathway sulfur metabolism; glutathione biosynthesis; glutathione from L-cysteine and L-glutamate: step 1/2. This chain is Glutamate--cysteine ligase, found in Shewanella amazonensis (strain ATCC BAA-1098 / SB2B).